We begin with the raw amino-acid sequence, 153 residues long: ATP synthase subunit a (153 aa).

2 helical membrane-spanning segments follow: residues 43–63 (AFHL…LLIF) and 104–124 (IAPL…VDLI).

The protein belongs to the ATPase A chain family. F-type ATPases have 2 components, CF(1) - the catalytic core - and CF(0) - the membrane proton channel. CF(1) has five subunits: alpha(3), beta(3), gamma(1), delta(1), epsilon(1). CF(0) has three main subunits: a(1), b(2) and c(9-12). The alpha and beta chains form an alternating ring which encloses part of the gamma chain. CF(1) is attached to CF(0) by a central stalk formed by the gamma and epsilon chains, while a peripheral stalk is formed by the delta and b chains.

It is found in the cell inner membrane. Key component of the proton channel; it plays a direct role in the translocation of protons across the membrane. This is ATP synthase subunit a (atpB) from Pseudomonas putida (Arthrobacter siderocapsulatus).